Reading from the N-terminus, the 353-residue chain is MGGCVSTALKVGAETVAEGHIDLISFAINYFKNAVPYIVKYLGRQQRPKEVDMEATLTEAKESKGFQPWKISCQPKGAVRGLFIGVNYGNTEAQLSGCCHDIMMMIGALQKRNFPLTEVVILADEEDVPGRTGEPTRANILRYLAWLAQDAQPNDVLFFHYSGHGTRANARDDDCEEYDQCIVPMDYVENGCIVDNEIHEILVSQLPKGVRLTAVFDCSHSGSMLDLPYAYVCDSSKDGSGSCGMKRVREDNDVQADVLMISACADDEAALGVDNTQDFYESGKDSGGAATFCLTAMMMREEPLTFLDLLVHTREMLKSRGFTQVPHLSASKPINLMQRFSLEGLFPQERTLL.

Gly2 is lipidated: N-myristoyl glycine.

Belongs to the peptidase C14B family. In terms of processing, palmitoylated. Proteolytic cleavage by MCA3 occurs prior or during secretion and requires MCA4 membrane localization. Cleavage is dispensable for secretion and parasite growth and virulence in the mammalian host. In vitro, can be cleaved by MCA2 but specifically cleaved by MCA3 in vivo.

It is found in the cell projection. The protein resides in the cilium. Its subcellular location is the flagellum membrane. It localises to the secreted. Its function is as follows. Inactive metacaspase which plays a role in parasite bloodstream form growth and in parasite virulence within the mammalian host. This chain is Inactive metacaspase-4, found in Trypanosoma brucei brucei.